Here is a 327-residue protein sequence, read N- to C-terminus: Peroxidase N (327 aa).

Residues 1–28 form the signal peptide; it reads MKTQTKVMGGHVLLTVFTLCMLCSAVRA. Q29 is modified (pyrrolidone carboxylic acid). Disulfide bonds link C39-C116, C72-C77, C122-C323, and C200-C232. The active-site Proton acceptor is the H70. The Ca(2+) site is built by D71, V74, G76, D78, and S80. Residue N155 is glycosylated (N-linked (GlcNAc...) asparagine). Residue P163 coordinates substrate. A glycan (N-linked (GlcNAc...) asparagine) is linked at N182. H193 lines the heme b pocket. T194 provides a ligand contact to Ca(2+). N209 and N239 each carry an N-linked (GlcNAc...) asparagine glycan. D245 contacts Ca(2+). N247 is a glycosylation site (N-linked (GlcNAc...) asparagine). S248 and D253 together coordinate Ca(2+). N281 carries N-linked (GlcNAc...) asparagine glycosylation.

The protein belongs to the peroxidase family. Classical plant (class III) peroxidase subfamily. It depends on Ca(2+) as a cofactor. Requires heme b as cofactor.

The protein resides in the secreted. It carries out the reaction 2 a phenolic donor + H2O2 = 2 a phenolic radical donor + 2 H2O. In terms of biological role, removal of H(2)O(2), oxidation of toxic reductants, biosynthesis and degradation of lignin, suberization, auxin catabolism, response to environmental stresses such as wounding, pathogen attack and oxidative stress. These functions might be dependent on each isozyme/isoform in each plant tissue. The sequence is that of Peroxidase N (HRPN) from Armoracia rusticana (Horseradish).